Here is a 211-residue protein sequence, read N- to C-terminus: ATP phosphoribosyltransferase (211 aa).

Belongs to the ATP phosphoribosyltransferase family. Short subfamily. Heteromultimer composed of HisG and HisZ subunits.

The protein localises to the cytoplasm. It carries out the reaction 1-(5-phospho-beta-D-ribosyl)-ATP + diphosphate = 5-phospho-alpha-D-ribose 1-diphosphate + ATP. It functions in the pathway amino-acid biosynthesis; L-histidine biosynthesis; L-histidine from 5-phospho-alpha-D-ribose 1-diphosphate: step 1/9. In terms of biological role, catalyzes the condensation of ATP and 5-phosphoribose 1-diphosphate to form N'-(5'-phosphoribosyl)-ATP (PR-ATP). Has a crucial role in the pathway because the rate of histidine biosynthesis seems to be controlled primarily by regulation of HisG enzymatic activity. In Pseudomonas fluorescens (strain Pf0-1), this protein is ATP phosphoribosyltransferase.